A 34-amino-acid polypeptide reads, in one-letter code: Photosystem II reaction center protein M (34 aa).

Residues 5-25 (ILAFIATALFILVPTAFLLII) traverse the membrane as a helical segment.

The protein belongs to the PsbM family. PSII is composed of 1 copy each of membrane proteins PsbA, PsbB, PsbC, PsbD, PsbE, PsbF, PsbH, PsbI, PsbJ, PsbK, PsbL, PsbM, PsbT, PsbX, PsbY, PsbZ, Psb30/Ycf12, at least 3 peripheral proteins of the oxygen-evolving complex and a large number of cofactors. It forms dimeric complexes.

It localises to the plastid. The protein localises to the chloroplast thylakoid membrane. One of the components of the core complex of photosystem II (PSII). PSII is a light-driven water:plastoquinone oxidoreductase that uses light energy to abstract electrons from H(2)O, generating O(2) and a proton gradient subsequently used for ATP formation. It consists of a core antenna complex that captures photons, and an electron transfer chain that converts photonic excitation into a charge separation. This subunit is found at the monomer-monomer interface. This chain is Photosystem II reaction center protein M, found in Cenchrus americanus (Pearl millet).